The sequence spans 105 residues: uncharacterized protein (105 aa).

Positions 81-105 (NNNNKTITVDNNNNNNNNNNNNNNK) are disordered.

This is an uncharacterized protein from Dictyostelium discoideum (Social amoeba).